The chain runs to 162 residues: Large ribosomal subunit protein eL24 (162 aa).

Disordered stretches follow at residues 64-83 (DIHA…PYSR) and 117-162 (ERIK…GGKR). A compositionally biased stretch (basic residues) spans 71–81 (KKRRRTTKKPY). Positions 117–135 (ERIKKTKDEKKAKKAEVTK) are enriched in basic and acidic residues.

The protein belongs to the eukaryotic ribosomal protein eL24 family.

It is found in the cytoplasm. The protein is Large ribosomal subunit protein eL24 (RPL24) of Hordeum vulgare (Barley).